The primary structure comprises 277 residues: F420-dependent methylenetetrahydromethanopterin dehydrogenase (277 aa).

Positions 249–277 (EKATDSVSRKPHGADGKRLNKTKLMEKPE) are disordered.

This sequence belongs to the MTD family.

The enzyme catalyses 5,10-methylenetetrahydromethanopterin + oxidized coenzyme F420-(gamma-L-Glu)(n) + 2 H(+) = 5,10-methenyl-5,6,7,8-tetrahydromethanopterin + reduced coenzyme F420-(gamma-L-Glu)(n). The protein operates within one-carbon metabolism; methanogenesis from CO(2); 5,10-methylene-5,6,7,8-tetrahydromethanopterin from 5,10-methenyl-5,6,7,8-tetrahydromethanopterin (coenzyme F420 route): step 1/1. Catalyzes the reversible reduction of methenyl-H(4)MPT(+) to methylene-H(4)MPT. This is F420-dependent methylenetetrahydromethanopterin dehydrogenase from Methanococcus aeolicus (strain ATCC BAA-1280 / DSM 17508 / OCM 812 / Nankai-3).